Reading from the N-terminus, the 288-residue chain is MKISPLCPSCLLGRVYYEAKLVTDDEDLISQCVDESLKILAENYSSRPINAHLATRIHRRVYEILGVEDPYAEVKARANEVARQVLPLAKEIVEGSDDPFKTAVIVSIVGNNFDYGVQGHKVVEEEFRDFLKRKVQEGLKINDTERIKELSSGKVVYLTDNAGEIFFDTLLMKEIKRRCEKLTAVVRGRPIISDATIEDARLARVDKIADELLTNGKGAIGIIMDELPDETRKALEEADLIVAKGMANYECLSDGSLKPIAFLLTAKCEPVARDIGVNVGDMVAKVVE.

The Subfamily I CxxC motif signature appears at 7–10 (CPSC). Mn(2+) is bound by residues Asp-160, Asn-161, and Asp-194. A Subfamily I GNFE-like motif motif is present at residues 247–250 (ANYE). A Subfamily I KC motif motif is present at residues 267 to 268 (KC).

It belongs to the damage-control phosphatase family. Nucleotides phosphatase I subfamily. The cofactor is [2Fe-2S] cluster. It depends on Mn(2+) as a cofactor. Ni(2+) is required as a cofactor.

Metal-dependent phosphatase with probable damage-control functions. Could hydrolyze oxidatively damaged purine nucleotides or their biosynthetic intermediates. This chain is Damage-control phosphatase AF_1104, found in Archaeoglobus fulgidus (strain ATCC 49558 / DSM 4304 / JCM 9628 / NBRC 100126 / VC-16).